The sequence spans 80 residues: Metallothionein-like protein BIF98 (80 aa).

It belongs to the metallothionein superfamily. Type 15 family.

Functionally, metallothioneins have a high content of cysteine residues that bind various heavy metals. This chain is Metallothionein-like protein BIF98, found in Brassica rapa subsp. pekinensis (Chinese cabbage).